A 510-amino-acid chain; its full sequence is Histidine ammonia-lyase (510 aa).

The 5-imidazolinone (Ala-Gly) cross-link spans Ala143 to Gly145. The residue at position 144 (Ser144) is a 2,3-didehydroalanine (Ser).

Belongs to the PAL/histidase family. Post-translationally, contains an active site 4-methylidene-imidazol-5-one (MIO), which is formed autocatalytically by cyclization and dehydration of residues Ala-Ser-Gly.

It is found in the cytoplasm. The enzyme catalyses L-histidine = trans-urocanate + NH4(+). Its pathway is amino-acid degradation; L-histidine degradation into L-glutamate; N-formimidoyl-L-glutamate from L-histidine: step 1/3. In Psychromonas ingrahamii (strain DSM 17664 / CCUG 51855 / 37), this protein is Histidine ammonia-lyase.